Consider the following 442-residue polypeptide: tRNA modification GTPase MnmE (442 aa).

(6S)-5-formyl-5,6,7,8-tetrahydrofolate-binding residues include Arg-27, Glu-84, and Lys-124. One can recognise a TrmE-type G domain in the interval Gly-221–Glu-366. GTP contacts are provided by residues Asn-231–Ser-236, Ser-250–Thr-256, and Asp-275–Gly-278. Mg(2+) contacts are provided by Ser-235 and Thr-256. (6S)-5-formyl-5,6,7,8-tetrahydrofolate is bound at residue Lys-442.

It belongs to the TRAFAC class TrmE-Era-EngA-EngB-Septin-like GTPase superfamily. TrmE GTPase family. Homodimer. Heterotetramer of two MnmE and two MnmG subunits. K(+) serves as cofactor.

The protein localises to the cytoplasm. Functionally, exhibits a very high intrinsic GTPase hydrolysis rate. Involved in the addition of a carboxymethylaminomethyl (cmnm) group at the wobble position (U34) of certain tRNAs, forming tRNA-cmnm(5)s(2)U34. The sequence is that of tRNA modification GTPase MnmE from Brucella suis (strain ATCC 23445 / NCTC 10510).